The sequence spans 487 residues: Glutamate--tRNA ligase (487 aa).

The 'HIGH' region motif lies at 11 to 21 (PSPTGYPHLGN). Zn(2+)-binding residues include cysteine 108, cysteine 110, cysteine 135, and aspartate 137. The 'KMSKS' region motif lies at 245-249 (KLSKR). Lysine 248 contributes to the ATP binding site.

The protein belongs to the class-I aminoacyl-tRNA synthetase family. Glutamate--tRNA ligase type 1 subfamily. As to quaternary structure, monomer. It depends on Zn(2+) as a cofactor.

It is found in the cytoplasm. It catalyses the reaction tRNA(Glu) + L-glutamate + ATP = L-glutamyl-tRNA(Glu) + AMP + diphosphate. Functionally, catalyzes the attachment of glutamate to tRNA(Glu) in a two-step reaction: glutamate is first activated by ATP to form Glu-AMP and then transferred to the acceptor end of tRNA(Glu). The polypeptide is Glutamate--tRNA ligase (Dehalococcoides mccartyi (strain ATCC BAA-2100 / JCM 16839 / KCTC 5957 / BAV1)).